The chain runs to 190 residues: Endoribonuclease YbeY (190 aa).

H147, H151, and H157 together coordinate Zn(2+).

Belongs to the endoribonuclease YbeY family. Zn(2+) is required as a cofactor.

It is found in the cytoplasm. Functionally, single strand-specific metallo-endoribonuclease involved in late-stage 70S ribosome quality control and in maturation of the 3' terminus of the 16S rRNA. This chain is Endoribonuclease YbeY, found in Nitrobacter winogradskyi (strain ATCC 25391 / DSM 10237 / CIP 104748 / NCIMB 11846 / Nb-255).